We begin with the raw amino-acid sequence, 657 residues long: Oleate activated transcription factor 3 (657 aa).

The zn(2)-C6 fungal-type DNA-binding region spans 21–48 (CLNCRRRKTKCDRGKPSCSNCLKLGETC).

This sequence belongs to the OAF3 family.

The protein localises to the cytoplasm. It localises to the nucleus. It is found in the mitochondrion. Its function is as follows. Transcriptional inhibitor with a significantly increased number of target genes in response to oleate. The sequence is that of Oleate activated transcription factor 3 (OAF3) from Kluyveromyces lactis (strain ATCC 8585 / CBS 2359 / DSM 70799 / NBRC 1267 / NRRL Y-1140 / WM37) (Yeast).